Consider the following 273-residue polypeptide: Dermonecrotic toxin LruSicTox-alphaIC1b (273 aa).

H5 is a catalytic residue. E25 and D27 together coordinate Mg(2+). The active-site Nucleophile is the H41. Intrachain disulfides connect C45/C51 and C47/C190. D85 provides a ligand contact to Mg(2+).

It belongs to the arthropod phospholipase D family. Class II subfamily. The cofactor is Mg(2+). Expressed by the venom gland.

It localises to the secreted. It catalyses the reaction an N-(acyl)-sphingosylphosphocholine = an N-(acyl)-sphingosyl-1,3-cyclic phosphate + choline. The enzyme catalyses an N-(acyl)-sphingosylphosphoethanolamine = an N-(acyl)-sphingosyl-1,3-cyclic phosphate + ethanolamine. It carries out the reaction a 1-acyl-sn-glycero-3-phosphocholine = a 1-acyl-sn-glycero-2,3-cyclic phosphate + choline. The catalysed reaction is a 1-acyl-sn-glycero-3-phosphoethanolamine = a 1-acyl-sn-glycero-2,3-cyclic phosphate + ethanolamine. Functionally, dermonecrotic toxins cleave the phosphodiester linkage between the phosphate and headgroup of certain phospholipids (sphingolipid and lysolipid substrates), forming an alcohol (often choline) and a cyclic phosphate. This toxin acts on sphingomyelin (SM). It may also act on ceramide phosphoethanolamine (CPE), lysophosphatidylcholine (LPC) and lysophosphatidylethanolamine (LPE), but not on lysophosphatidylserine (LPS), and lysophosphatidylglycerol (LPG). It acts by transphosphatidylation, releasing exclusively cyclic phosphate products as second products. Induces dermonecrosis, hemolysis, increased vascular permeability, edema, inflammatory response, and platelet aggregation. The sequence is that of Dermonecrotic toxin LruSicTox-alphaIC1b from Loxosceles rufescens (Mediterranean recluse spider).